The sequence spans 457 residues: Multidrug resistance protein MdtK (457 aa).

Helical transmembrane passes span 11-31 (LLAL…MGVV), 46-66 (AVAV…GLLL), 93-113 (WLAF…DHII), 127-147 (AVGF…FQVL), 160-180 (GMVI…IFIY), 188-208 (LGGV…FLMM), 243-263 (LPVA…ALLV), 278-300 (LNFS…IRVG), 316-336 (YTSI…TVVF), 350-370 (VVVM…SDAI), 387-407 (IFFI…YLLG), and 418-438 (PSGF…LMAL).

This sequence belongs to the multi antimicrobial extrusion (MATE) (TC 2.A.66.1) family. MdtK subfamily.

It is found in the cell inner membrane. Functionally, multidrug efflux pump that functions probably as a Na(+)/drug antiporter. The chain is Multidrug resistance protein MdtK from Yersinia enterocolitica serotype O:8 / biotype 1B (strain NCTC 13174 / 8081).